The chain runs to 330 residues: DNA-directed RNA polymerase subunit alpha (330 aa).

The interval 1-229 is alpha N-terminal domain (alpha-NTD); sequence MKNLKFIKPF…DHFNVLVELS (229 aa). The segment at 245-330 is alpha C-terminal domain (alpha-CTD); it reads AHNYVLDLEI…HSVEEDKDKH (86 aa).

It belongs to the RNA polymerase alpha chain family. Homodimer. The RNAP catalytic core consists of 2 alpha, 1 beta, 1 beta' and 1 omega subunit. When a sigma factor is associated with the core the holoenzyme is formed, which can initiate transcription.

The enzyme catalyses RNA(n) + a ribonucleoside 5'-triphosphate = RNA(n+1) + diphosphate. DNA-dependent RNA polymerase catalyzes the transcription of DNA into RNA using the four ribonucleoside triphosphates as substrates. This is DNA-directed RNA polymerase subunit alpha from Aster yellows witches'-broom phytoplasma (strain AYWB).